A 118-amino-acid polypeptide reads, in one-letter code: Small ribosomal subunit protein uS13 (118 aa).

The segment at 92–118 is disordered; it reads RRSLPVRGQRTKTNARTRKGPRKPIKK.

This sequence belongs to the universal ribosomal protein uS13 family. As to quaternary structure, part of the 30S ribosomal subunit. Forms a loose heterodimer with protein S19. Forms two bridges to the 50S subunit in the 70S ribosome.

Functionally, located at the top of the head of the 30S subunit, it contacts several helices of the 16S rRNA. In the 70S ribosome it contacts the 23S rRNA (bridge B1a) and protein L5 of the 50S subunit (bridge B1b), connecting the 2 subunits; these bridges are implicated in subunit movement. Contacts the tRNAs in the A and P-sites. The polypeptide is Small ribosomal subunit protein uS13 (Acinetobacter baylyi (strain ATCC 33305 / BD413 / ADP1)).